The chain runs to 566 residues: Endoglucanase B (566 aa).

The signal sequence occupies residues 1 to 30 (MKKRRSSKVILSLAIVVALLAAVEPNAALA). The active-site Proton donor is E177. E299 (nucleophile) is an active-site residue.

The protein belongs to the glycosyl hydrolase 5 (cellulase A) family.

It carries out the reaction Endohydrolysis of (1-&gt;4)-beta-D-glucosidic linkages in cellulose, lichenin and cereal beta-D-glucans.. This Paenibacillus lautus (Bacillus lautus) protein is Endoglucanase B (celB).